The following is a 369-amino-acid chain: GTPase Obg (369 aa).

The region spanning 1–159 (MKFIDEARIE…RMLKLELKVL (159 aa)) is the Obg domain. Positions 128–147 (LHFKSSTNRAPRQKTDGKPG) are disordered. Residues 160–334 (ADVGLLGMPN…LCYAIYDYLA (175 aa)) form the OBG-type G domain. GTP-binding positions include 166 to 173 (GMPNAGKS), 191 to 195 (FTTLA), 213 to 216 (DIPG), 284 to 287 (NKLD), and 315 to 317 (SAL). Residues S173 and T193 each contribute to the Mg(2+) site.

Belongs to the TRAFAC class OBG-HflX-like GTPase superfamily. OBG GTPase family. Monomer. It depends on Mg(2+) as a cofactor.

The protein resides in the cytoplasm. Functionally, an essential GTPase which binds GTP, GDP and possibly (p)ppGpp with moderate affinity, with high nucleotide exchange rates and a fairly low GTP hydrolysis rate. Plays a role in control of the cell cycle, stress response, ribosome biogenesis and in those bacteria that undergo differentiation, in morphogenesis control. The protein is GTPase Obg of Burkholderia multivorans (strain ATCC 17616 / 249).